The following is a 692-amino-acid chain: MAREFSLEKTRNIGIMAHVDAGKTTTTERILYYTGKIHKIGETHEGASQMDWMEQEQERGITITSAATTAQWDGHRVNIIDTPGHVDFTIEVQRSLRVLDGAVTVLDAQSGVEPQTETVWRQATEYGVPRIVFANKMDKIGADFLYSVQSLHDRLQANAHPIQLPIGSEDDFRGIIDLIKMKAEIYTNDLGTDILEEDIPAEYVDQANEYREKLVEAVADTDEDLMMKYLEGEEITNEELMAAIRRATINVEFYPVLCGSAFKNKGVQLMLDAVIDYLPSPLDIPAIKGINPDTDEEETRPASDEEPFAALAFKIMTDPFVGRLTFFRVYSGVLNSGSYVLNTSKGKRERIGRILQMHANSRQEIETVYAGDIAAAVGLKDTTTGDSLTDEKSKVILESIEVPEPVIQLMVEPKSKADQDKMGIALQKLAEEDPTFRVETNVETGETVISGMGELHLDVLVDRMKREFKVEANVGAPQVSYRETFRASTQARGFFKRQSGGKGQFGDVWIEFTPNEEGKGFEFENAIVGGVVPREFIPAVEKGLVESMANGVLAGYPMVDVKAKLYDGSYHDVDSSETAFKIAASLALKEAAKSAQPAILEPMMLVTITAPEDNLGDVMGHVTARRGRVDGMEARGNTQVVRAFVPLAEMFGYATVLRSATQGRGTFMMVFDHYEDVPKSVQEEIIKKNSGE.

In terms of domain architecture, tr-type G spans 8–282; that stretch reads EKTRNIGIMA…AVIDYLPSPL (275 aa). Residues 17 to 24, 81 to 85, and 135 to 138 contribute to the GTP site; these read AHVDAGKT, DTPGH, and NKMD.

It belongs to the TRAFAC class translation factor GTPase superfamily. Classic translation factor GTPase family. EF-G/EF-2 subfamily.

The protein localises to the cytoplasm. In terms of biological role, catalyzes the GTP-dependent ribosomal translocation step during translation elongation. During this step, the ribosome changes from the pre-translocational (PRE) to the post-translocational (POST) state as the newly formed A-site-bound peptidyl-tRNA and P-site-bound deacylated tRNA move to the P and E sites, respectively. Catalyzes the coordinated movement of the two tRNA molecules, the mRNA and conformational changes in the ribosome. The sequence is that of Elongation factor G from Streptococcus agalactiae serotype III (strain NEM316).